The following is a 206-amino-acid chain: Eukaryotic translation initiation factor isoform 4E-2 (206 aa).

Cys103 and Cys142 are oxidised to a cystine.

Belongs to the eukaryotic initiation factor 4E family. EIF4F is a multi-subunit complex, the composition of which varies with external and internal environmental conditions. It is composed of at least EIF4A, EIF4E and EIF4G. EIF4E is also known to interact with other partners. In higher plants two isoforms of EIF4F have been identified, named isoform EIF4F and isoform EIF(iso)4F. Isoform EIF4F has subunits p220 and p26, whereas isoform EIF(iso)4F has subunits p82 and p28. According to the redox status, the Cys-103-Cys-142 disulfide bridge may have a role in regulating protein function by affecting its ability to bind capped mRNA.

Its function is as follows. Recognizes and binds the 7-methylguanosine-containing mRNA cap during an early step in the initiation of protein synthesis and facilitates ribosome binding by inducing the unwinding of the mRNAs secondary structures. This is Eukaryotic translation initiation factor isoform 4E-2 from Oryza sativa subsp. japonica (Rice).